We begin with the raw amino-acid sequence, 443 residues long: Chromosome partition protein MukF (443 aa).

The segment at 209 to 237 (LDETSGNLRELQDTLNAAGDKLQAQLLRI) is leucine-zipper.

Belongs to the MukF family. In terms of assembly, interacts, and probably forms a ternary complex, with MukE and MukB via its C-terminal region. The complex formation is stimulated by calcium or magnesium. It is required for an interaction between MukE and MukB.

It is found in the cytoplasm. It localises to the nucleoid. Its function is as follows. Involved in chromosome condensation, segregation and cell cycle progression. May participate in facilitating chromosome segregation by condensation DNA from both sides of a centrally located replisome during cell division. Not required for mini-F plasmid partitioning. Probably acts via its interaction with MukB and MukE. Overexpression results in anucleate cells. It has a calcium binding activity. The sequence is that of Chromosome partition protein MukF from Actinobacillus pleuropneumoniae serotype 5b (strain L20).